A 364-amino-acid polypeptide reads, in one-letter code: Inner membrane ABC transporter permease protein YejB (364 aa).

Residues 1 to 8 (MGAYLIRR) are Periplasmic-facing. A helical membrane pass occupies residues 9–29 (LLLVIPTLWAIITINFFIVQI). Over 30-37 (APGGPVDQ) the chain is Cytoplasmic. A helical membrane pass occupies residues 38–58 (AIAAIEFGNAGVLPGAGGEGV). Residues 59–135 (RASHAQTGVG…LTLIKDSLPV (77 aa)) are Periplasmic-facing. The ABC transmembrane type-1 domain occupies 133–348 (LPVSITLGLW…LIGLLLNIVS (216 aa)). The chain crosses the membrane as a helical span at residues 136 to 156 (SITLGLWSTLIIYLVSIPLGI). Residues 157–172 (RKAVYNGSRFDVWSSA) are Cytoplasmic-facing. A helical membrane pass occupies residues 173 to 193 (FIIIGYAIPAFLFAILLIVFF). Residues 194–224 (AGGSYFDLFPLRGLVSANFDSLPWYQKITDY) are Periplasmic-facing. A helical transmembrane segment spans residues 225-245 (LWHITLPVLATVIGGFAALTM). The Cytoplasmic segment spans residues 246-284 (LTKNSFLDEVRKQYVVTARAKGVSEKNILWKHVFRNAML). The chain crosses the membrane as a helical span at residues 285-305 (LVIAGFPATFISMFFTGSLLI). The Periplasmic portion of the chain corresponds to 306–326 (EVMFSLNGLGLLGYEATVSRD). Residues 327-347 (YPVMFGTLYIFTLIGLLLNIV) form a helical membrane-spanning segment. Topologically, residues 348 to 364 (SDISYTLVDPRIDFEGR) are cytoplasmic.

This sequence belongs to the binding-protein-dependent transport system permease family. OppBC subfamily.

Its subcellular location is the cell inner membrane. Its function is as follows. Probably part of a binding-protein-dependent transport system. Probably responsible for the translocation of the substrate across the membrane. This Escherichia coli O157:H7 protein is Inner membrane ABC transporter permease protein YejB (yejB).